The primary structure comprises 1409 residues: DNA-directed RNA polymerase subunit beta' (1409 aa).

Residues Cys70, Cys72, Cys85, and Cys88 each coordinate Zn(2+). Residues Asp458, Asp460, and Asp462 each coordinate Mg(2+). Positions 813, 887, 894, and 897 each coordinate Zn(2+).

It belongs to the RNA polymerase beta' chain family. In terms of assembly, the RNAP catalytic core consists of 2 alpha, 1 beta, 1 beta' and 1 omega subunit. When a sigma factor is associated with the core the holoenzyme is formed, which can initiate transcription. Mg(2+) serves as cofactor. It depends on Zn(2+) as a cofactor.

It catalyses the reaction RNA(n) + a ribonucleoside 5'-triphosphate = RNA(n+1) + diphosphate. DNA-dependent RNA polymerase catalyzes the transcription of DNA into RNA using the four ribonucleoside triphosphates as substrates. This Acidovorax ebreus (strain TPSY) (Diaphorobacter sp. (strain TPSY)) protein is DNA-directed RNA polymerase subunit beta'.